The chain runs to 337 residues: Protein-methionine-sulfoxide reductase catalytic subunit MsrP (337 aa).

The segment at residues Met1–Ala50 is a signal peptide (tat-type signal). Mo-molybdopterin-binding positions include Asn94, Tyr97–Glu98, Cys152, Thr187, Asn237, Arg242, and Ser253–Lys255.

The protein belongs to the MsrP family. As to quaternary structure, heterodimer of a catalytic subunit (MsrP) and a heme-binding subunit (MsrQ). Mo-molybdopterin serves as cofactor. Predicted to be exported by the Tat system. The position of the signal peptide cleavage has not been experimentally proven.

The protein resides in the periplasm. The catalysed reaction is L-methionyl-[protein] + a quinone + H2O = L-methionyl-(S)-S-oxide-[protein] + a quinol. The enzyme catalyses L-methionyl-[protein] + a quinone + H2O = L-methionyl-(R)-S-oxide-[protein] + a quinol. Its function is as follows. Part of the MsrPQ system that repairs oxidized periplasmic proteins containing methionine sulfoxide residues (Met-O), using respiratory chain electrons. Thus protects these proteins from oxidative-stress damage caused by reactive species of oxygen and chlorine generated by the host defense mechanisms. MsrPQ is essential for the maintenance of envelope integrity under bleach stress, rescuing a wide series of structurally unrelated periplasmic proteins from methionine oxidation. The catalytic subunit MsrP is non-stereospecific, being able to reduce both (R-) and (S-) diastereoisomers of methionine sulfoxide. This chain is Protein-methionine-sulfoxide reductase catalytic subunit MsrP, found in Pseudomonas syringae pv. tomato (strain ATCC BAA-871 / DC3000).